A 93-amino-acid polypeptide reads, in one-letter code: Small ribosomal subunit protein uS19 (93 aa).

The protein belongs to the universal ribosomal protein uS19 family.

In terms of biological role, protein S19 forms a complex with S13 that binds strongly to the 16S ribosomal RNA. This is Small ribosomal subunit protein uS19 from Nocardia farcinica (strain IFM 10152).